The chain runs to 295 residues: Protoheme IX farnesyltransferase (295 aa).

Helical transmembrane passes span 8–28 (VTKP…FLLA), 35–55 (YTLF…GCVF), 84–104 (VSLV…WFGA), 107–127 (LACW…SLYM), 132–152 (VYGT…GYCA), 162–182 (LILL…IAIF), 208–228 (ITLY…GGYA), 233–253 (LVVA…GYKV), and 264–284 (FVFS…DFMV).

This sequence belongs to the UbiA prenyltransferase family. Protoheme IX farnesyltransferase subfamily.

Its subcellular location is the cell inner membrane. It catalyses the reaction heme b + (2E,6E)-farnesyl diphosphate + H2O = Fe(II)-heme o + diphosphate. It functions in the pathway porphyrin-containing compound metabolism; heme O biosynthesis; heme O from protoheme: step 1/1. Functionally, converts heme B (protoheme IX) to heme O by substitution of the vinyl group on carbon 2 of heme B porphyrin ring with a hydroxyethyl farnesyl side group. The protein is Protoheme IX farnesyltransferase of Enterobacter sp. (strain 638).